The sequence spans 390 residues: Chorismate synthase (390 aa).

Residues R48 and R54 each coordinate NADP(+). Residues 125–127 (RSS), 238–239 (NA), G278, 293–297 (KPTSS), and R319 contribute to the FMN site. Positions 359–390 (PRIPGSTTNQIHPVEMQASAPRAEDPEPDESS) are disordered.

Belongs to the chorismate synthase family. In terms of assembly, homotetramer. FMNH2 serves as cofactor.

It catalyses the reaction 5-O-(1-carboxyvinyl)-3-phosphoshikimate = chorismate + phosphate. It functions in the pathway metabolic intermediate biosynthesis; chorismate biosynthesis; chorismate from D-erythrose 4-phosphate and phosphoenolpyruvate: step 7/7. In terms of biological role, catalyzes the anti-1,4-elimination of the C-3 phosphate and the C-6 proR hydrogen from 5-enolpyruvylshikimate-3-phosphate (EPSP) to yield chorismate, which is the branch point compound that serves as the starting substrate for the three terminal pathways of aromatic amino acid biosynthesis. This reaction introduces a second double bond into the aromatic ring system. This chain is Chorismate synthase, found in Nitrosomonas europaea (strain ATCC 19718 / CIP 103999 / KCTC 2705 / NBRC 14298).